We begin with the raw amino-acid sequence, 162 residues long: Ribosome maturation factor RimP (162 aa).

Belongs to the RimP family.

It localises to the cytoplasm. Its function is as follows. Required for maturation of 30S ribosomal subunits. This Syntrophotalea carbinolica (strain DSM 2380 / NBRC 103641 / GraBd1) (Pelobacter carbinolicus) protein is Ribosome maturation factor RimP.